A 363-amino-acid polypeptide reads, in one-letter code: Pyruvate dehydrogenase E1 component subunit beta-1, mitochondrial (363 aa).

The transit peptide at 1 to 29 (MLGILRQRAIDGASTLRRTRFALVSARSY) directs the protein to the mitochondrion. A thiamine diphosphate-binding site is contributed by Glu92. Ile145, Ala193, Ile194, and Asp196 together coordinate K(+). Residues Lys247 and Lys254 each participate in a glycyl lysine isopeptide (Lys-Gly) (interchain with G-Cter in ubiquitin) cross-link.

In terms of assembly, tetramer of 2 alpha and 2 beta subunits. The cofactor is thiamine diphosphate. Expressed in roots, immature rosettes, and mature rosettes.

The protein resides in the mitochondrion matrix. It catalyses the reaction N(6)-[(R)-lipoyl]-L-lysyl-[protein] + pyruvate + H(+) = N(6)-[(R)-S(8)-acetyldihydrolipoyl]-L-lysyl-[protein] + CO2. Its function is as follows. The pyruvate dehydrogenase complex catalyzes the overall conversion of pyruvate to acetyl-CoA and CO(2). It contains multiple copies of three enzymatic components: pyruvate dehydrogenase (E1), dihydrolipoamide acetyltransferase (E2) and lipoamide dehydrogenase (E3). This chain is Pyruvate dehydrogenase E1 component subunit beta-1, mitochondrial (PDH2), found in Arabidopsis thaliana (Mouse-ear cress).